A 470-amino-acid chain; its full sequence is Pyruvate kinase I (470 aa).

Arg32 contacts substrate. 4 residues coordinate K(+): Asn34, Ser36, Asp66, and Thr67. 34 to 37 (NFSH) provides a ligand contact to ATP. ATP contacts are provided by Arg73 and Lys156. Lys220 contributes to the substrate binding site. Glu222 is a Mg(2+) binding site. Gly245, Asp246, and Thr278 together coordinate substrate. A Mg(2+)-binding site is contributed by Asp246.

Belongs to the pyruvate kinase family. Homotetramer. The cofactor is Mg(2+). It depends on K(+) as a cofactor.

It carries out the reaction pyruvate + ATP = phosphoenolpyruvate + ADP + H(+). It functions in the pathway carbohydrate degradation; glycolysis; pyruvate from D-glyceraldehyde 3-phosphate: step 5/5. With respect to regulation, belongs to type I PK; fructose 1,6-bisphosphate-activated. In terms of biological role, catalyzes the formation of pyruvate in the last step of glycolysis, it is irreversible under physiological conditions. The reaction is critical for the control of metabolic flux in the second part of glycolysis. This Salmonella typhimurium (strain LT2 / SGSC1412 / ATCC 700720) protein is Pyruvate kinase I (pykF).